Consider the following 118-residue polypeptide: MARVKRGVVAHAKHKKVLEQAKGFYGRRKNTIRAAKAAVDKAGQYAYRDRKVRKRNFRSLWIQRINAAARLEGFTYSRFIFGLEKAGIEMDRKVLADIAGNDPAGFKAIADKVRAALA.

Belongs to the bacterial ribosomal protein bL20 family.

Its function is as follows. Binds directly to 23S ribosomal RNA and is necessary for the in vitro assembly process of the 50S ribosomal subunit. It is not involved in the protein synthesizing functions of that subunit. In Phenylobacterium zucineum (strain HLK1), this protein is Large ribosomal subunit protein bL20.